A 420-amino-acid chain; its full sequence is Pre-mRNA-splicing factor RBM22 (420 aa).

At alanine 2 the chain carries N-acetylalanine. Phosphoserine occurs at positions 4 and 102. Glycyl lysine isopeptide (Lys-Gly) (interchain with G-Cter in SUMO2) cross-links involve residues lysine 139 and lysine 149. The C3H1-type zinc-finger motif lies at 159-186; sequence RNRPHICSFWVKGECKRGEECPYRHEKP. Lysine 212 carries the post-translational modification N6-acetyllysine. Residues 232-305 enclose the RRM domain; the sequence is TTLYVGGLGD…RRLNVKWGRS (74 aa). A Glycyl lysine isopeptide (Lys-Gly) (interchain with G-Cter in SUMO2) cross-link involves residue lysine 290. 2 disordered regions span residues 303–343 and 371–420; these read GRSQ…AAEE and IAPP…HSSP. Over residues 309–318 the composition is skewed to basic and acidic residues; sequence RGKEKEKDGT.

It belongs to the SLT11 family. Component of the pre-catalytic and catalytic spliceosome complexes. Component of the postcatalytic spliceosome P complex. Interacts with PDCD6; the interaction induces translocation of PDCD6 in the cytoplasm. Interacts with PPIL1.

It localises to the nucleus. It is found in the cytoplasm. Its function is as follows. Required for pre-mRNA splicing as component of the activated spliceosome. Involved in the first step of pre-mRNA splicing. Binds directly to the internal stem-loop (ISL) domain of the U6 snRNA and to the pre-mRNA intron near the 5' splice site during the activation and catalytic phases of the spliceosome cycle. Involved in both translocations of the nuclear SLU7 to the cytoplasm and the cytosolic calcium-binding protein PDCD6 to the nucleus upon cellular stress responses. In Rattus norvegicus (Rat), this protein is Pre-mRNA-splicing factor RBM22 (Rbm22).